The primary structure comprises 380 residues: Type 4 apparatus protein DotM (380 aa).

2 helical membrane passes run 18–38 and 99–119; these read MAPVWIVILLFITAYFVWALA and YPVICILVVLAFVLYNSNVTL.

The T4BSS is a complex nanomachine composed of several subcomplexes. This subunit is part of the Type IV Coupling Complex (T4CC), a subcomplex composed of the DotLMNYZ core and the IcmSW-LvgA adapter subunits, linked by the C-terminal tail of DotL. Six DotLMNYZ hetero-pentameric units may assemble into a hexameric nanomachine, forming an inner membrane channel for effectors to pass through. Interacts directly with DotL.

It localises to the cell inner membrane. Its function is as follows. Component of the Dot/Icm type IVB secretion system (T4BSS), which is used to inject bacterial effector proteins into eukaryotic host cells. Part of a subcomplex which recruits effector proteins and delivers them to the core transmembrane subcomplex. Forms the interacting surface for recruitment of acidic Glu-rich motif-containing effectors. This is Type 4 apparatus protein DotM from Legionella pneumophila subsp. pneumophila (strain Philadelphia 1 / ATCC 33152 / DSM 7513).